We begin with the raw amino-acid sequence, 222 residues long: Octanoyltransferase (222 aa).

The BPL/LPL catalytic domain maps to 35 to 214 (GTAPELIWLL…HLDGFLARLD (180 aa)). Residues 73-80 (RGGRYTYH), 145-147 (AIG), and 158-160 (GFS) each bind substrate. The Acyl-thioester intermediate role is filled by Cys-176.

Belongs to the LipB family.

It is found in the cytoplasm. The catalysed reaction is octanoyl-[ACP] + L-lysyl-[protein] = N(6)-octanoyl-L-lysyl-[protein] + holo-[ACP] + H(+). The protein operates within protein modification; protein lipoylation via endogenous pathway; protein N(6)-(lipoyl)lysine from octanoyl-[acyl-carrier-protein]: step 1/2. Functionally, catalyzes the transfer of endogenously produced octanoic acid from octanoyl-acyl-carrier-protein onto the lipoyl domains of lipoate-dependent enzymes. Lipoyl-ACP can also act as a substrate although octanoyl-ACP is likely to be the physiological substrate. In Novosphingobium aromaticivorans (strain ATCC 700278 / DSM 12444 / CCUG 56034 / CIP 105152 / NBRC 16084 / F199), this protein is Octanoyltransferase.